Consider the following 130-residue polypeptide: Small ribosomal subunit protein uS8 (130 aa).

Belongs to the universal ribosomal protein uS8 family. Part of the 30S ribosomal subunit. Contacts proteins S5 and S12.

Its function is as follows. One of the primary rRNA binding proteins, it binds directly to 16S rRNA central domain where it helps coordinate assembly of the platform of the 30S subunit. In Vibrio parahaemolyticus serotype O3:K6 (strain RIMD 2210633), this protein is Small ribosomal subunit protein uS8.